The following is a 654-amino-acid chain: Endoplasmic reticulum chaperone BiP (654 aa).

Residues 1 to 18 form the signal peptide; the sequence is MKLSLVAAMLLLLSAARA. The tract at residues 1–80 is required for interaction with ELAPOR1; that stretch reads MKLSLVAAML…EGERLIGDAA (80 aa). 36 to 39 contacts ATP; it reads GTTY. Phosphoserine is present on Ser-86. Position 96 (Lys-96) interacts with ATP. The residue at position 125 (Lys-125) is an N6-acetyllysine. The nucleotide-binding (NBD) stretch occupies residues 125-280; sequence KPYIQVDIGG…KKKTGKDVRK (156 aa). The residue at position 160 (Tyr-160) is a 3'-nitrotyrosine. Position 213 is an N6-acetyllysine (Lys-213). An ATP-binding site is contributed by 227 to 229; sequence GGT. Lys-271 carries the N6-acetyllysine modification. 293–300 is a binding site for ATP; that stretch reads EKAKRALS. Lys-326 is subject to N6-acetyllysine. Residue Lys-352 forms a Glycyl lysine isopeptide (Lys-Gly) (interchain with G-Cter in SUMO2) linkage. The residue at position 353 (Lys-353) is an N6-acetyllysine; alternate. A Glycyl lysine isopeptide (Lys-Gly) (interchain with G-Cter in SUMO1); alternate cross-link involves residue Lys-353. 364–367 lines the ATP pocket; sequence GSTR. Residues 409-419 are interdomain linker; that stretch reads QDTGDLVLLDV. Positions 420 to 500 are substrate-binding (SBD); it reads CPLTLGIETV…PRGVPQIEVT (81 aa). Lys-447 carries the N6-succinyllysine modification. The residue at position 492 (Arg-492) is an Omega-N-methylarginine. Residue Thr-518 is modified to O-AMP-threonine; alternate. At Thr-518 the chain carries Phosphothreonine; alternate. Lys-585 bears the N6,N6,N6-trimethyllysine; by METTL21A; in vitro mark. N6,N6-dimethyllysine; alternate is present on Lys-585. Lys-585 is modified (N6-methyllysine; alternate). Position 591 is an N6-methyllysine (Lys-591). Positions 633–654 are disordered; sequence KLYGSAGPPPTGEEDTAEKDEL. Thr-643 and Thr-648 each carry phosphothreonine. The segment covering 644–654 has biased composition (acidic residues); the sequence is GEEDTAEKDEL. Residues 651–654 carry the Prevents secretion from ER motif; sequence KDEL.

It belongs to the heat shock protein 70 family. Monomer and homooligomer; homooligomerization via the interdomain linker inactivates the chaperone activity and acts as a storage of HSPA5/BiP molecules. Interacts with DNAJC1 (via J domain). Component of an EIF2 complex at least composed of CELF1/CUGBP1, CALR, CALR3, EIF2S1, EIF2S2, HSP90B1 and HSPA5. Part of a large chaperone multiprotein complex comprising DNAJB11, HSP90B1, HSPA5, HYOU, PDIA2, PDIA4, PDIA6, PPIB, SDF2L1, UGGT1 and very small amounts of ERP29, but not, or at very low levels, CALR nor CANX. Interacts with TMEM132A and TRIM21. May form a complex with ERLEC1, OS9, SEL1L and SYVN1. Interacts with DNAJC10. Interacts with DNAJB9/ERdj4; leading to recruit HSPA5/BiP to ERN1/IRE1. Interacts with ERN1/IRE1 (via luminal domain); the interaction takes place following interaction with DNAJB9/ERdj4 and leads to inactivate ERN1/IRE1, the interaction also competitively inhibits ERN1 interaction with MANF. Interacts directly with MANF (via SAP domain); the interaction inhibits ATP binding to HSPA5/BiP and subsequent nucleotide exchange. Interacts with EIF2AK3/PERK (via luminal domain); interaction leads to inactivate EIF2AK3/PERK. Interacts with MX1. Interacts with METTL23. Interacts with CEMIP; the interaction induces calcium leakage from the endoplasmic reticulum and cell migration. Interacts with PCSK4 form; the interaction takes place in the endoplasmic reticulum. Interacts with CIPC. Interacts with CCDC88B (via C-terminus); the interaction opposes ERN1-mediated JNK activation, protecting against apoptosis. Interacts with INPP5K; necessary for INPP5K localization at the endoplasmic reticulum. Interacts with MANF; the interaction is direct. Interacts with LOXL2; leading to activate the ERN1/IRE1-XBP1 pathway of the unfolded protein response. Interacts with CLU under stressed condition; interaction increases CLU protein stability; facilitates its retrotranslocation and redistribution to the mitochondria; cooperatively suppress stress-induced apoptosis by stabilizing mitochondrial membrane integrity. Interacts with CCDC47. Interacts with CLN3. Interacts with ELAPOR1; may regulate the function of HSPA5 in apoptosis and cell proliferation. Interacts with CASP7. Interacts with ILDR2; the interaction stabilizes ILDR2 expression. Interacts with ADAM7. As to quaternary structure, (Microbial infection) Interacts with Japanese encephalitis virus envelope protein E. In terms of assembly, (Microbial infection) Interacts with R.delemar invasin CotH3 on the surface of nasal epithelial cells. Interacts with R.delemar invasin CotH2. (Microbial infection) Interacts with Zika virus envelope protein E and non-structural protein 1 in a chaperone-client manner. AMPylated by FICD. In unstressed cells, AMPylation at Thr-518 by FICD inactivates the chaperome activity: AMPylated form is locked in a relatively inert state and only weakly stimulated by J domain-containing proteins. In response to endoplasmic reticulum stress, de-AMPylation by the same protein, FICD, restores the chaperone activity.

It localises to the endoplasmic reticulum lumen. The protein localises to the melanosome. The protein resides in the cytoplasm. It is found in the cell surface. It catalyses the reaction ATP + H2O = ADP + phosphate + H(+). With respect to regulation, the chaperone activity is regulated by ATP-induced allosteric coupling of the nucleotide-binding (NBD) and substrate-binding (SBD) domains. In the ADP-bound and nucleotide-free (apo) states, the two domains have little interaction. In contrast, in the ATP-bound state the two domains are tightly coupled, which results in drastically accelerated kinetics in both binding and release of polypeptide substrates. J domain-containing co-chaperones (DNAJB9/ERdj4 or DNAJC10/ERdj5) stimulate the ATPase activity and are required for efficient substrate recognition by HSPA5/BiP. Homooligomerization inactivates participating HSPA5/BiP protomers and probably act as reservoirs to store HSPA5/BiP molecules when they are not needed by the cell. In terms of biological role, endoplasmic reticulum chaperone that plays a key role in protein folding and quality control in the endoplasmic reticulum lumen. Involved in the correct folding of proteins and degradation of misfolded proteins via its interaction with DNAJC10/ERdj5, probably to facilitate the release of DNAJC10/ERdj5 from its substrate. Acts as a key repressor of the EIF2AK3/PERK and ERN1/IRE1-mediated unfolded protein response (UPR). In the unstressed endoplasmic reticulum, recruited by DNAJB9/ERdj4 to the luminal region of ERN1/IRE1, leading to disrupt the dimerization of ERN1/IRE1, thereby inactivating ERN1/IRE1. Also binds and inactivates EIF2AK3/PERK in unstressed cells. Accumulation of misfolded protein in the endoplasmic reticulum causes release of HSPA5/BiP from ERN1/IRE1 and EIF2AK3/PERK, allowing their homodimerization and subsequent activation. Plays an auxiliary role in post-translational transport of small presecretory proteins across endoplasmic reticulum (ER). May function as an allosteric modulator for SEC61 channel-forming translocon complex, likely cooperating with SEC62 to enable the productive insertion of these precursors into SEC61 channel. Appears to specifically regulate translocation of precursors having inhibitory residues in their mature region that weaken channel gating. May also play a role in apoptosis and cell proliferation. Its function is as follows. (Microbial infection) Plays an important role in viral binding to the host cell membrane and entry for several flaviruses such as Dengue virus, Zika virus and Japanese encephalitis virus. Acts as a component of the cellular receptor for Dengue virus serotype 2/DENV-2 on human liver cells. Functionally, (Microbial infection) Acts as a receptor for CotH proteins expressed by fungi of the order mucorales, the causative agent of mucormycosis, which plays an important role in epithelial cell invasion by the fungi. Acts as a receptor for R.delemar CotH3 in nasal epithelial cells, which may be an early step in rhinoorbital/cerebral mucormycosis (RCM) disease progression. This is Endoplasmic reticulum chaperone BiP from Homo sapiens (Human).